Consider the following 1345-residue polypeptide: DNA-directed RNA polymerase subunit beta (1345 aa).

The protein belongs to the RNA polymerase beta chain family. As to quaternary structure, the RNAP catalytic core consists of 2 alpha, 1 beta, 1 beta' and 1 omega subunit. When a sigma factor is associated with the core the holoenzyme is formed, which can initiate transcription.

It carries out the reaction RNA(n) + a ribonucleoside 5'-triphosphate = RNA(n+1) + diphosphate. In terms of biological role, DNA-dependent RNA polymerase catalyzes the transcription of DNA into RNA using the four ribonucleoside triphosphates as substrates. In Shewanella oneidensis (strain ATCC 700550 / JCM 31522 / CIP 106686 / LMG 19005 / NCIMB 14063 / MR-1), this protein is DNA-directed RNA polymerase subunit beta.